A 709-amino-acid chain; its full sequence is Coiled-coil domain-containing protein 13 (709 aa).

Coiled coils occupy residues 70 to 97, 139 to 178, and 206 to 288; these read IFEKRVLEDEIQHLRSELRETVDENGRL, ELSKKNRGLMAESESAKVRIKQLTNRIQELEHQLQMASAK, and EVKA…QRQN. The residue at position 258 (serine 258) is a Phosphoserine. The disordered stretch occupies residues 281–312; that stretch reads KQLGQRQNKPAGSSSSEVPLSSDSRKMTAQEK. Residues 293–302 are compositionally biased toward low complexity; it reads SSSSEVPLSS. Positions 323–457 form a coiled coil; sequence DKQESWEKLA…ELEIGQLSVQ (135 aa). Disordered regions lie at residues 462 to 499, 512 to 542, and 600 to 641; these read KGGGEGASPADARFPEDQTPITNSPASAGDHVGRLGSS, SALTRPSLPSPHGTSPRFSDSPEQKGWQAQA, and KMRL…SSTQ. Serine 469 and serine 532 each carry phosphoserine. A coiled-coil region spans residues 539–604; that stretch reads QAQAAEMKAL…EQHLEKMRLE (66 aa).

As to quaternary structure, interacts with PCM1, CEP290 and PCNT.

Its subcellular location is the cytoplasm. The protein localises to the cytoskeleton. It is found in the microtubule organizing center. The protein resides in the centrosome. It localises to the centriolar satellite. Its subcellular location is the cilium basal body. In terms of biological role, required for primary cilia formation and promotes the localization of the ciliopathy protein BBS4 to both centriolar satellites and cilia. This chain is Coiled-coil domain-containing protein 13, found in Mus musculus (Mouse).